A 241-amino-acid chain; its full sequence is Eukaryotic translation initiation factor 3 subunit J (241 aa).

Positions 1–27 are enriched in basic and acidic residues; the sequence is MEEDWEQHGEKEEVPLPAKKPDANKWD. The segment at 1–99 is disordered; it reads MEEDWEQHGE…ENMTPEQKLA (99 aa). Acidic residues predominate over residues 28-45; sequence GEDEEEEVKDSWEDEDEL. A coiled-coil region spans residues 31–119; that stretch reads EEEEVKDSWE…ESDLKNALDT (89 aa). Composition is skewed to basic and acidic residues over residues 46-58 and 69-90; these read EEKK…ETPK and IVEK…KEAE.

Belongs to the eIF-3 subunit J family. In terms of assembly, component of the eukaryotic translation initiation factor 3 (eIF-3) complex.

Its subcellular location is the cytoplasm. Its function is as follows. Component of the eukaryotic translation initiation factor 3 (eIF-3) complex, which is involved in protein synthesis of a specialized repertoire of mRNAs and, together with other initiation factors, stimulates binding of mRNA and methionyl-tRNAi to the 40S ribosome. The eIF-3 complex specifically targets and initiates translation of a subset of mRNAs involved in cell proliferation. In Culex quinquefasciatus (Southern house mosquito), this protein is Eukaryotic translation initiation factor 3 subunit J.